The chain runs to 212 residues: MPATVICPSRAEEKLLRKQGFILIAGLDEAGRGCLAGPVVAGAVIMPPRLKGDWVEMVRDSKVLSPAKREYLYCHIVSMAVTFGVGAVDNEQIDSMGIAPATRLAMKQAVEDLTCQPDFLLVDYLKLPDIPLPQKGIVDGDALCFSIACASIVAKVSRDRLMSKLDMEYPGYYLAKHKGYGTALHVECICQKGISPIHRRTFAPLKGMIDGL.

The region spanning 22 to 212 is the RNase H type-2 domain; sequence ILIAGLDEAG…APLKGMIDGL (191 aa). Residues Asp28, Glu29, and Asp123 each coordinate a divalent metal cation.

This sequence belongs to the RNase HII family. Mn(2+) is required as a cofactor. It depends on Mg(2+) as a cofactor.

It is found in the cytoplasm. The enzyme catalyses Endonucleolytic cleavage to 5'-phosphomonoester.. Endonuclease that specifically degrades the RNA of RNA-DNA hybrids. This chain is Ribonuclease HII, found in Dehalococcoides mccartyi (strain ATCC BAA-2100 / JCM 16839 / KCTC 5957 / BAV1).